Here is a 454-residue protein sequence, read N- to C-terminus: tRNA modification GTPase MnmE (454 aa).

(6S)-5-formyl-5,6,7,8-tetrahydrofolate is bound by residues Arg23, Glu80, and Lys120. The 162-residue stretch at 216–377 folds into the TrmE-type G domain; that stretch reads GMKVVIAGRP…LRNHLKQSMG (162 aa). Residue Asn226 coordinates K(+). Residues 226 to 231, 245 to 251, 270 to 273, 335 to 338, and 358 to 360 each bind GTP; these read NAGKSS, TDIAGTT, DTAG, NKAD, and SAR. Ser230 provides a ligand contact to Mg(2+). 3 residues coordinate K(+): Thr245, Ile247, and Thr250. Thr251 lines the Mg(2+) pocket. Residue Lys454 coordinates (6S)-5-formyl-5,6,7,8-tetrahydrofolate.

This sequence belongs to the TRAFAC class TrmE-Era-EngA-EngB-Septin-like GTPase superfamily. TrmE GTPase family. In terms of assembly, homodimer. Heterotetramer of two MnmE and two MnmG subunits. The cofactor is K(+).

The protein resides in the cytoplasm. Functionally, exhibits a very high intrinsic GTPase hydrolysis rate. Involved in the addition of a carboxymethylaminomethyl (cmnm) group at the wobble position (U34) of certain tRNAs, forming tRNA-cmnm(5)s(2)U34. The chain is tRNA modification GTPase MnmE from Yersinia enterocolitica serotype O:8 / biotype 1B (strain NCTC 13174 / 8081).